Reading from the N-terminus, the 243-residue chain is Ribonuclease 3 (243 aa).

Positions 10-146 constitute an RNase III domain; sequence INRFRKRFDT…FIGALYLDQG (137 aa). Residue glutamate 59 coordinates Mg(2+). Aspartate 63 is an active-site residue. Aspartate 132 and glutamate 135 together coordinate Mg(2+). The active site involves glutamate 135. Residues 172 to 241 enclose the DRBM domain; it reads DFKTQFQEYV…AESAYKQLKQ (70 aa). Residues 219-231 are compositionally biased toward basic and acidic residues; it reads GKGKTKKESEQRA. Residues 219–243 form a disordered region; sequence GKGKTKKESEQRAAESAYKQLKQIK.

Belongs to the ribonuclease III family. In terms of assembly, homodimer. Requires Mg(2+) as cofactor.

Its subcellular location is the cytoplasm. The catalysed reaction is Endonucleolytic cleavage to 5'-phosphomonoester.. Digests double-stranded RNA. Involved in the processing of primary rRNA transcript to yield the immediate precursors to the large and small rRNAs (23S and 16S). Processes some mRNAs, and tRNAs when they are encoded in the rRNA operon. Processes pre-crRNA and tracrRNA of type II CRISPR loci if present in the organism. This chain is Ribonuclease 3, found in Staphylococcus aureus (strain bovine RF122 / ET3-1).